Consider the following 461-residue polypeptide: Argininosuccinate lyase (461 aa).

The protein belongs to the lyase 1 family. Argininosuccinate lyase subfamily.

It localises to the cytoplasm. It carries out the reaction 2-(N(omega)-L-arginino)succinate = fumarate + L-arginine. Its pathway is amino-acid biosynthesis; L-arginine biosynthesis; L-arginine from L-ornithine and carbamoyl phosphate: step 3/3. This chain is Argininosuccinate lyase, found in Aeromonas salmonicida (strain A449).